The sequence spans 276 residues: Diaminopimelate epimerase (276 aa).

Asn-13, Gln-46, and Asn-66 together coordinate substrate. Cys-75 functions as the Proton donor in the catalytic mechanism. Substrate is bound by residues Gly-76 to Asn-77, Asn-159, Asn-192, and Glu-210 to Arg-211. The active-site Proton acceptor is Cys-219. Residue Gly-220–Thr-221 coordinates substrate.

Belongs to the diaminopimelate epimerase family. In terms of assembly, homodimer.

It localises to the cytoplasm. It catalyses the reaction (2S,6S)-2,6-diaminopimelate = meso-2,6-diaminopimelate. It functions in the pathway amino-acid biosynthesis; L-lysine biosynthesis via DAP pathway; DL-2,6-diaminopimelate from LL-2,6-diaminopimelate: step 1/1. Catalyzes the stereoinversion of LL-2,6-diaminopimelate (L,L-DAP) to meso-diaminopimelate (meso-DAP), a precursor of L-lysine and an essential component of the bacterial peptidoglycan. The sequence is that of Diaminopimelate epimerase from Aeromonas salmonicida (strain A449).